Consider the following 142-residue polypeptide: MAP3K7 C-terminal-like protein (142 aa).

Ubiquitous.

The chain is MAP3K7 C-terminal-like protein (Map3k7cl) from Mus musculus (Mouse).